Reading from the N-terminus, the 357-residue chain is uncharacterized protein (357 aa).

The Radical SAM core domain occupies 27–242; sequence HFGNTVTFER…VSSVRLNFPK (216 aa). 3 residues coordinate [4Fe-4S] cluster: cysteine 44, cysteine 50, and cysteine 53.

It depends on [4Fe-4S] cluster as a cofactor.

This is an uncharacterized protein from Methanocaldococcus jannaschii (strain ATCC 43067 / DSM 2661 / JAL-1 / JCM 10045 / NBRC 100440) (Methanococcus jannaschii).